The chain runs to 279 residues: HTH-type transcriptional activator RhaS (279 aa).

The 99-residue stretch at 175–273 (QALLGWLQNN…SQAPKSLRHQ (99 aa)) folds into the HTH araC/xylS-type domain. DNA-binding regions (H-T-H motif) lie at residues 192 to 213 (GSLA…KQHT) and 240 to 263 (ITTI…RKAF).

As to quaternary structure, binds DNA as a dimer.

The protein localises to the cytoplasm. Its function is as follows. Activates expression of the rhaBAD and rhaT operons. This is HTH-type transcriptional activator RhaS from Pectobacterium carotovorum subsp. carotovorum (strain PC1).